Reading from the N-terminus, the 111-residue chain is uncharacterized protein (111 aa).

The next 3 helical transmembrane spans lie at 4–23, 39–61, and 65–84; these read LHQV…LGHV, IYLG…VLSA, and SGIQ…EAVL.

It is found in the cell membrane. This is an uncharacterized protein from Bacillus subtilis (strain 168).